A 126-amino-acid polypeptide reads, in one-letter code: Small ribosomal subunit protein uS13 (126 aa).

Positions 92 to 126 are disordered; it reads HRRGLPVRGQRTKTNARTRKGPKKTVAGKKKATRK.

Belongs to the universal ribosomal protein uS13 family. Part of the 30S ribosomal subunit. Forms a loose heterodimer with protein S19. Forms two bridges to the 50S subunit in the 70S ribosome.

Located at the top of the head of the 30S subunit, it contacts several helices of the 16S rRNA. In the 70S ribosome it contacts the 23S rRNA (bridge B1a) and protein L5 of the 50S subunit (bridge B1b), connecting the 2 subunits; these bridges are implicated in subunit movement. Contacts the tRNAs in the A and P-sites. The sequence is that of Small ribosomal subunit protein uS13 from Deinococcus deserti (strain DSM 17065 / CIP 109153 / LMG 22923 / VCD115).